The following is a 550-amino-acid chain: MFCVQCEQTIRTPAGNGCSYAQGMCGKTAETSDLQDLLIAALQGLSAWAVKAREYGIINHDVDSFAPRAFFSTLTNVNFDSPRIVGYAREAIALREALKAQCLAVEANARVDNPMADLQLVSDDLGELQRQAAEFTPNKDKAAIGENILGLRLLCLYGLKGAAAYMEHAHVLGQYDNDIYAQYHKIMAWLGTWPADMNALLECSMEIGQMNFKVMSILDAGETSKYGHPTPTQVNVKATAGKCILISGHDLKDLYNLLEQTEGTGVNVYTHGEMLPAHGYPELRKFKHLVGNYGSGWQNQQVEFARFPGPIVMTSNCIIDPTVGAYDDRIWTRSIVGWPGVRHLDGEDFSAVIAQAQQMAGFPYSEIPHLITVGFGRQTLLGAADTLIDLVSREKLRHIFLLGGCDGARGERHYFTDFATSVPDDCLILTLACGKYRFNKLEFGDIEGLPRLVDAGQCNDAYSAIILAVTLAEKLGCGVNDLPLSLVLSWFEQKAIVILLTLLSLGVKNIVTGPTAPGFLTPDLLAVLNEKFGLRSITTVEEDMKQLLSA.

[2Fe-2S] cluster-binding residues include C3, C6, C18, and C25. H249, E273, C317, C405, C433, C458, E492, and K494 together coordinate hybrid [4Fe-2O-2S] cluster. C405 bears the Cysteine persulfide mark.

It belongs to the HCP family. It depends on [2Fe-2S] cluster as a cofactor. Hybrid [4Fe-2O-2S] cluster serves as cofactor.

The protein resides in the cytoplasm. It catalyses the reaction A + NH4(+) + H2O = hydroxylamine + AH2 + H(+). In terms of biological role, catalyzes the reduction of hydroxylamine to form NH(3) and H(2)O. The polypeptide is Hydroxylamine reductase (Escherichia coli (strain SMS-3-5 / SECEC)).